A 62-amino-acid chain; its full sequence is Large ribosomal subunit protein bL35 (62 aa).

The segment covering 1 to 26 (MPKMKTKSGLKKRIKITATGKVKRGN) has biased composition (basic residues). The disordered stretch occupies residues 1–62 (MPKMKTKSGL…SDFKRYKELI (62 aa)). The span at 53–62 (SDFKRYKELI) shows a compositional bias: basic and acidic residues.

Belongs to the bacterial ribosomal protein bL35 family.

The protein is Large ribosomal subunit protein bL35 of Metamycoplasma arthritidis (strain 158L3-1) (Mycoplasma arthritidis).